The primary structure comprises 567 residues: ERO1-like protein 2 (567 aa).

The N-terminal stretch at 1–22 (MKIAKGLVGLLILYKNVCQVLC) is a signal peptide. N49 is a glycosylation site (N-linked (GlcNAc...) asparagine). Intrachain disulfides connect C88/C386, C98/C103, C154/C325, and C389/C392. Residues R188, T190, W201, S258, H261, and K290 each contribute to the FAD site. C389 serves as the catalytic Nucleophile. Residue C392 is part of the active site. N546 carries an N-linked (GlcNAc...) asparagine glycan.

This sequence belongs to the EROs family. As to quaternary structure, may function both as a monomer and a homodimer. The cofactor is FAD. N-glycosylated.

Its subcellular location is the endoplasmic reticulum membrane. Essential oxidoreductase that oxidizes proteins in the endoplasmic reticulum to produce disulfide bonds. Acts by oxidizing directly pdi1 isomerase through a direct disulfide exchange. Does not act as a direct oxidant of folding substrate, but relies on pdi1 to transfer oxidizing equivalent. Does not oxidize all pdi related proteins, suggesting that it can discriminate between pdi1 and related proteins. Its reoxidation probably involves electron transfer to molecular oxygen via FAD. Acts independently of glutathione. May be responsible for a significant proportion of reactive oxygen species (ROS) in the cell, thereby being a source of oxidative stress. This Schizosaccharomyces pombe (strain 972 / ATCC 24843) (Fission yeast) protein is ERO1-like protein 2 (ero12).